The chain runs to 436 residues: Regulatory protein E2 (436 aa).

The tract at residues 1–201 (MEKLSERFSA…DTVFTPVTSS (201 aa)) is transactivation domain. Residues 195–209 (FTPVTSSTPPVGVAS) are compositionally biased toward low complexity. Positions 195 to 328 (FTPVTSSTPP…DGGGVAPDEV (134 aa)) are disordered. Positions 210–230 (QNSAPEPASTSDSPQRSSQVT) are enriched in polar residues. The span at 284 to 293 (LSRESAESPR) shows a compositional bias: basic and acidic residues. The tract at residues 352-436 (DPPVILLRGA…EWSYGQFDDL (85 aa)) is DNA-binding domain.

The protein belongs to the papillomaviridae E2 protein family. As to quaternary structure, binds DNA as homodimer. Interacts with protein E1; this interaction greatly increases E1 DNA-binding activity. Interacts with protein L1; this interaction enhances E2-dependent replication and transcription activation. Interacts with protein L2; this interaction inhibits E2 transcriptional activity but not DNA replication function E2. Interacts with protein E7; this interaction inhibits E7 oncogenic activity. Interacts with host TAF1; this interaction modulates E2-dependent transcriptional regulation. Interacts with host BRD4; this interaction mediates E2 transcriptional activation function. Additionally, the interaction with host BRD4 on mitotic chromosomes mediates tethering of the viral genome. Interacts with host TOPBP1; this interaction is required for optimal viral DNA replication. Post-translationally, phosphorylated.

It is found in the host nucleus. In terms of biological role, plays a role in the initiation of viral DNA replication. A dimer of E2 interacts with a dimer of E1 in order to improve specificity of E1 DNA binding activity. Once the complex recognizes and binds DNA at specific sites, the E2 dimer is removed from DNA. E2 also regulates viral transcription through binding to the E2RE response element (5'-ACCNNNNNNGGT-3') present in multiple copies in the regulatory regions of the viral genome. Activates or represses transcription depending on E2RE's position with regards to proximal promoter elements including the TATA-box. Repression occurs by sterically hindering the assembly of the transcription initiation complex. This chain is Regulatory protein E2, found in Human papillomavirus 22.